Consider the following 90-residue polypeptide: Probable Fe(2+)-trafficking protein (90 aa).

This sequence belongs to the Fe(2+)-trafficking protein family.

In terms of biological role, could be a mediator in iron transactions between iron acquisition and iron-requiring processes, such as synthesis and/or repair of Fe-S clusters in biosynthetic enzymes. The chain is Probable Fe(2+)-trafficking protein from Colwellia psychrerythraea (strain 34H / ATCC BAA-681) (Vibrio psychroerythus).